Reading from the N-terminus, the 193-residue chain is Potassium-transporting ATPase KdpC subunit (193 aa).

Residues 14–34 (ITFTFLVLCGLVYPLIVTGIA) form a helical membrane-spanning segment.

It belongs to the KdpC family. The system is composed of three essential subunits: KdpA, KdpB and KdpC.

It localises to the cell membrane. Its function is as follows. Part of the high-affinity ATP-driven potassium transport (or Kdp) system, which catalyzes the hydrolysis of ATP coupled with the electrogenic transport of potassium into the cytoplasm. This subunit acts as a catalytic chaperone that increases the ATP-binding affinity of the ATP-hydrolyzing subunit KdpB by the formation of a transient KdpB/KdpC/ATP ternary complex. In Bacillus anthracis (strain A0248), this protein is Potassium-transporting ATPase KdpC subunit.